Consider the following 198-residue polypeptide: Segregation and condensation protein B (198 aa).

It belongs to the ScpB family. As to quaternary structure, homodimer. Homodimerization may be required to stabilize the binding of ScpA to the Smc head domains. Component of a cohesin-like complex composed of ScpA, ScpB and the Smc homodimer, in which ScpA and ScpB bind to the head domain of Smc. The presence of the three proteins is required for the association of the complex with DNA.

Its subcellular location is the cytoplasm. In terms of biological role, participates in chromosomal partition during cell division. May act via the formation of a condensin-like complex containing Smc and ScpA that pull DNA away from mid-cell into both cell halves. This chain is Segregation and condensation protein B, found in Streptococcus mutans serotype c (strain ATCC 700610 / UA159).